A 266-amino-acid chain; its full sequence is UPF0328 protein ECU05_1610/ECU11_0120 (266 aa).

Belongs to the UPF0328 family.

The sequence is that of UPF0328 protein ECU05_1610/ECU11_0120 from Encephalitozoon cuniculi (strain GB-M1) (Microsporidian parasite).